The sequence spans 172 residues: Shikimate kinase (172 aa).

11–16 lines the ATP pocket; that stretch reads GSGKTT. Residue threonine 15 participates in Mg(2+) binding. Positions 33, 57, and 79 each coordinate substrate. Arginine 117 provides a ligand contact to ATP. Residue arginine 136 coordinates substrate.

It belongs to the shikimate kinase family. As to quaternary structure, monomer. Mg(2+) is required as a cofactor.

It localises to the cytoplasm. It carries out the reaction shikimate + ATP = 3-phosphoshikimate + ADP + H(+). Its pathway is metabolic intermediate biosynthesis; chorismate biosynthesis; chorismate from D-erythrose 4-phosphate and phosphoenolpyruvate: step 5/7. In terms of biological role, catalyzes the specific phosphorylation of the 3-hydroxyl group of shikimic acid using ATP as a cosubstrate. The polypeptide is Shikimate kinase (Caldicellulosiruptor saccharolyticus (strain ATCC 43494 / DSM 8903 / Tp8T 6331)).